The primary structure comprises 232 residues: DNA repair and recombination protein RadB (232 aa).

It belongs to the eukaryotic RecA-like protein family. RadB subfamily.

In terms of biological role, involved in DNA repair and in homologous recombination. May regulate the cleavage reactions of the branch-structured DNA. Has a very weak ATPase activity that is not stimulated by DNA. Binds DNA but does not promote DNA strands exchange. In Methanosphaera stadtmanae (strain ATCC 43021 / DSM 3091 / JCM 11832 / MCB-3), this protein is DNA repair and recombination protein RadB.